The following is a 535-amino-acid chain: Butyrophilin-like protein 9 (535 aa).

The N-terminal stretch at Met-1–Pro-34 is a signal peptide. Over Ser-35–Lys-256 the chain is Extracellular. An Ig-like V-type domain is found at Glu-54–Phe-135. A disulfide bridge connects residues Cys-59 and Cys-133. Asn-102, Asn-139, and Asn-224 each carry an N-linked (GlcNAc...) asparagine glycan. The helical transmembrane segment at Ser-257–Leu-277 threads the bilayer. A coiled-coil region spans residues Val-276–Glu-315. Topologically, residues Arg-278 to Trp-535 are cytoplasmic. The region spanning Asp-310–Gly-509 is the B30.2/SPRY domain. Residues Ser-340–Phe-367 form a disordered region.

It belongs to the immunoglobulin superfamily. BTN/MOG family.

Its subcellular location is the membrane. This Homo sapiens (Human) protein is Butyrophilin-like protein 9 (BTNL9).